Here is a 239-residue protein sequence, read N- to C-terminus: Ribonuclease PH (239 aa).

Phosphate is bound by residues Arg-86 and 124-126 (GTR).

It belongs to the RNase PH family. Homohexameric ring arranged as a trimer of dimers.

It catalyses the reaction tRNA(n+1) + phosphate = tRNA(n) + a ribonucleoside 5'-diphosphate. Its function is as follows. Phosphorolytic 3'-5' exoribonuclease that plays an important role in tRNA 3'-end maturation. Removes nucleotide residues following the 3'-CCA terminus of tRNAs; can also add nucleotides to the ends of RNA molecules by using nucleoside diphosphates as substrates, but this may not be physiologically important. Probably plays a role in initiation of 16S rRNA degradation (leading to ribosome degradation) during starvation. This Marinomonas sp. (strain MWYL1) protein is Ribonuclease PH.